Consider the following 992-residue polypeptide: Disks large-associated protein 1 (992 aa).

2 disordered regions span residues 154–209 and 355–375; these read SLEG…SWWS and KAMG…SPKV. The residue at position 169 (Ser169) is a Phosphoserine. Residues 195-209 show a composition bias toward low complexity; sequence SNASNASPTSPSWWS. Phosphoserine occurs at positions 362, 365, 368, 372, 389, 418, 421, 425, 428, 437, 509, 516, and 578. The residue at position 579 (Thr579) is a Phosphothreonine. 2 positions are modified to phosphoserine: Ser581 and Ser605. The residue at position 606 (Thr606) is a Phosphothreonine. Ser608 and Ser611 each carry phosphoserine. Interaction with DYL2 stretches follow at residues 665–676 and 687–698; these read LSIGIQVDDAEE and SKFQSVGVQVEE. The tract at residues 914-980 is disordered; that stretch reads WKQMDPLDKK…QNSATESAES (67 aa). 2 stretches are compositionally biased toward basic and acidic residues: residues 918-927 and 943-958; these read DPLDKKERRA and IRER…EARK. Phosphoserine is present on Ser947. The span at 969–978 shows a compositional bias: polar residues; sequence VRQNSATESA. The PDZ-binding signature appears at 990–992; sequence TRL.

This sequence belongs to the SAPAP family. Interacts with guanylate kinase-like domain of DLG1, DLG2, DLG3, DLG4 and AIP1. Interacts with the PDZ domain of SHANK1, SHANK2 and SHANK3. Found in a complex with DLG4 and SHANK1, SHANK2 or SHANK3. Found in a complex with DLG4 and BEGAIN. Interacts with DYL2 and LRFN1. Interacts with MPP2 (via the SH3-Guanylate kinase-like sub-module). Ubiquitinated by TRIM3; leading to proteasomal degradation. As to expression, expressed in brain and testis.

It localises to the cell membrane. It is found in the postsynaptic density. The protein resides in the synapse. Functionally, part of the postsynaptic scaffold in neuronal cells. This Rattus norvegicus (Rat) protein is Disks large-associated protein 1.